We begin with the raw amino-acid sequence, 863 residues long: Protein translocase subunit SecA (863 aa).

ATP-binding positions include glutamine 88, 106–110 (GEGKT), and aspartate 507. Residues 806 to 863 (KSHEQNEQFLSNTTESGVNENGEAQITKVPRNSPCPCGSGKKYKECHGKSGPKKGILA) are disordered. A compositionally biased stretch (polar residues) spans 812-829 (EQFLSNTTESGVNENGEA). Positions 840, 842, 851, and 852 each coordinate Zn(2+).

Belongs to the SecA family. Monomer and homodimer. Part of the essential Sec protein translocation apparatus which comprises SecA, SecYEG and auxiliary proteins SecDF-YajC and YidC. Requires Zn(2+) as cofactor.

It is found in the cell inner membrane. The protein localises to the cytoplasm. It catalyses the reaction ATP + H2O + cellular proteinSide 1 = ADP + phosphate + cellular proteinSide 2.. In terms of biological role, part of the Sec protein translocase complex. Interacts with the SecYEG preprotein conducting channel. Has a central role in coupling the hydrolysis of ATP to the transfer of proteins into and across the cell membrane, serving as an ATP-driven molecular motor driving the stepwise translocation of polypeptide chains across the membrane. The sequence is that of Protein translocase subunit SecA from Campylobacter lari (strain RM2100 / D67 / ATCC BAA-1060).